Reading from the N-terminus, the 178-residue chain is Fluoride-specific ion channel FluC 2 (178 aa).

A run of 4 helical transmembrane segments spans residues 25–45, 63–83, 97–117, and 129–149; these read PDIHLDIVLVVFCGGAIGTAI, FVANMLACFCYAGLTAYLAGA, GLGMGVCGGLSTMSTLALEGF, and IAYLLVTFALGLVCASAGVWA. Glycine 104 and serine 107 together coordinate Na(+).

The protein belongs to the fluoride channel Fluc/FEX (TC 1.A.43) family.

It is found in the cell membrane. It catalyses the reaction fluoride(in) = fluoride(out). Na(+) is not transported, but it plays an essential structural role and its presence is essential for fluoride channel function. Fluoride-specific ion channel. Important for reducing fluoride concentration in the cell, thus reducing its toxicity. The protein is Fluoride-specific ion channel FluC 2 of Bifidobacterium longum (strain NCC 2705).